We begin with the raw amino-acid sequence, 270 residues long: Urease accessory protein UreD (270 aa).

It belongs to the UreD family. In terms of assembly, ureD, UreF and UreG form a complex that acts as a GTP-hydrolysis-dependent molecular chaperone, activating the urease apoprotein by helping to assemble the nickel containing metallocenter of UreC. The complex may form in the order UreABCD, UreABCDF, UreABCDFG. The UreE protein probably delivers the nickel in a GTPase-dependent fashion.

It localises to the cytoplasm. Necessary for the functional incorporation of the urease nickel metallocenter. The polypeptide is Urease accessory protein UreD (Klebsiella aerogenes (Enterobacter aerogenes)).